The sequence spans 130 residues: Small ribosomal subunit protein uS8 (130 aa).

This sequence belongs to the universal ribosomal protein uS8 family.

The protein is Small ribosomal subunit protein uS8 (RPS22) of Candida glabrata (strain ATCC 2001 / BCRC 20586 / JCM 3761 / NBRC 0622 / NRRL Y-65 / CBS 138) (Yeast).